Reading from the N-terminus, the 271-residue chain is Probable ribosomal RNA small subunit methyltransferase A (271 aa).

The S-adenosyl-L-methionine site is built by N22, L24, G49, E70, D97, and N112.

Belongs to the class I-like SAM-binding methyltransferase superfamily. rRNA adenine N(6)-methyltransferase family. RsmA subfamily.

It localises to the cytoplasm. Its function is as follows. Specifically dimethylates two adjacent adenosines in the loop of a conserved hairpin near the 3'-end of 16S rRNA in the 30S particle. May play a critical role in biogenesis of 30S subunits. In Methanosphaera stadtmanae (strain ATCC 43021 / DSM 3091 / JCM 11832 / MCB-3), this protein is Probable ribosomal RNA small subunit methyltransferase A.